The primary structure comprises 756 residues: Conserved oligomeric Golgi complex subunit 2 (756 aa).

Residues 62 to 82 (RSELRSHLASLNRELVDLINR) are a coiled coil. Residues 173–199 (WQNEDANSMGRSSMNDENSTQQDGTTM) form a disordered region.

It belongs to the COG2 family. Homodimer. Component of the conserved oligomeric Golgi complex which is composed of eight different subunits and is required for normal Golgi morphology and localization. Binds to COG3 and COG4. Interacts with FPP3/VETH1 and FPP2/VETH2; this interaction promotes the association between cortical microtubules and EXO70A1. Binds to SEC15B, and, possibly, with EXO70A1, SEC3A and SEC10A.

Its subcellular location is the golgi apparatus membrane. Functionally, required for normal Golgi morphology and function. Ensures, when in complex with FPP3/VETH1 and FPP2/VETH2, the correct secondary cell wall (SCW) deposition pattern by recruiting exocyst components to cortical microtubules in xylem cells during secondary cell wall deposition. The protein is Conserved oligomeric Golgi complex subunit 2 of Arabidopsis thaliana (Mouse-ear cress).